A 118-amino-acid polypeptide reads, in one-letter code: Light-harvesting protein B-800/850 gamma chain (118 aa).

Its function is as follows. Seems to be required for the LH-II stabilization. This chain is Light-harvesting protein B-800/850 gamma chain (pucE), found in Rhodobacter capsulatus (Rhodopseudomonas capsulata).